Consider the following 263-residue polypeptide: Ribonuclease HII (263 aa).

The 192-residue stretch at 71–262 (KAIAGIDEVG…VKSMCCDSTN (192 aa)) folds into the RNase H type-2 domain. 3 residues coordinate a divalent metal cation: Asp-77, Glu-78, and Asp-172.

It belongs to the RNase HII family. Mn(2+) is required as a cofactor. It depends on Mg(2+) as a cofactor.

Its subcellular location is the cytoplasm. It carries out the reaction Endonucleolytic cleavage to 5'-phosphomonoester.. Endonuclease that specifically degrades the RNA of RNA-DNA hybrids. The polypeptide is Ribonuclease HII (Streptococcus pyogenes serotype M1).